A 278-amino-acid chain; its full sequence is MSRSSPDQLTRFLAQVQGRPKKGLSQNFLIDGNILRKILAVSCVEAGDWVLEIGPGFGALTEVLVNQGAHVVALEKDPMFEETLKQLPIDLEITDACKYPLSQLEEKGWQGKGRVVANLPYHITTPLLTKLFLEVPNQWKTVTVMMQDEVARRITAQPGGKEYGSLTIFLQFFADVRYAFKVSPGCFFPKPQVSSAVVHMTVKETFPLETSLHQKFFSLTRAAFGQRRKLLANALKDLYPKELVFSALNQLNFSEKTRPETLSLNEYLQLFHLLSSNA.

The S-adenosyl-L-methionine site is built by N27, L29, G54, E75, D95, and N118.

The protein belongs to the class I-like SAM-binding methyltransferase superfamily. rRNA adenine N(6)-methyltransferase family. RsmA subfamily.

The protein resides in the cytoplasm. It catalyses the reaction adenosine(1518)/adenosine(1519) in 16S rRNA + 4 S-adenosyl-L-methionine = N(6)-dimethyladenosine(1518)/N(6)-dimethyladenosine(1519) in 16S rRNA + 4 S-adenosyl-L-homocysteine + 4 H(+). Functionally, specifically dimethylates two adjacent adenosines (A1518 and A1519) in the loop of a conserved hairpin near the 3'-end of 16S rRNA in the 30S particle. May play a critical role in biogenesis of 30S subunits. The sequence is that of Ribosomal RNA small subunit methyltransferase A from Chlamydia caviae (strain ATCC VR-813 / DSM 19441 / 03DC25 / GPIC) (Chlamydophila caviae).